Reading from the N-terminus, the 252-residue chain is Cysteine-rich repeat secretory protein 38 (252 aa).

An N-terminal signal peptide occupies residues 1–27 (MSSLKRIVWFPILAIAIQILSIHTVLS). Gnk2-homologous domains follow at residues 34 to 136 (FLFH…STNF) and 142 to 248 (FENR…IYPF).

Belongs to the cysteine-rich repeat secretory protein family.

It is found in the secreted. This chain is Cysteine-rich repeat secretory protein 38 (CRRSP38), found in Arabidopsis thaliana (Mouse-ear cress).